Here is a 266-residue protein sequence, read N- to C-terminus: DLA class II histocompatibility antigen, DR-1 beta chain (266 aa).

A signal peptide spans 1–29; it reads MVCLCFLGGSWMTALMLILMVLNPPFAWA. The beta-1 stretch occupies residues 30–124; the sequence is RDTPPHFLEV…IESFTVQRRV (95 aa). Over 30–227 the chain is Extracellular; sequence RDTPPHFLEV…RAQSDSAQSK (198 aa). 2 disulfide bridges follow: Cys-44/Cys-108 and Cys-146/Cys-202. The N-linked (GlcNAc...) asparagine glycan is linked to Asn-48. Positions 125-227 are beta-2; that stretch reads EPTVTVYPTK…RAQSDSAQSK (103 aa). The 89-residue stretch at 126 to 214 folds into the Ig-like C1-type domain; it reads PTVTVYPTKT…EHPSLTSPVT (89 aa). A helical transmembrane segment spans residues 228–250; the sequence is MLSGIGGFVLGLLFLAVGLFIYF. At 251–266 the chain is on the cytoplasmic side; sequence RNQKGHSGLQPTGLLS.

This sequence belongs to the MHC class II family.

The protein localises to the membrane. The polypeptide is DLA class II histocompatibility antigen, DR-1 beta chain (Canis lupus familiaris (Dog)).